The sequence spans 633 residues: Mini-chromosome maintenance complex-binding protein (633 aa).

The disordered stretch occupies residues 154–198 (PSTSYTPSRHKRSYEEDEDMEQHPSKQKEQHMGSGGDSHGCGEPK). The span at 174–184 (EQHPSKQKEQH) shows a compositional bias: basic and acidic residues.

It belongs to the MCMBP family. As to quaternary structure, interacts with the MCM complex: associates with the MCM3-7 complex which lacks MCM2, while it does not interact with the MCM complex when MCM2 is present (MCM2-7 complex).

The protein localises to the nucleus. Associated component of the MCM complex that acts as a regulator of DNA replication. Binds to the MCM complex during late S phase and promotes the disassembly of the MCM complex from chromatin, thereby acting as a key regulator of pre-replication complex (pre-RC) unloading from replicated DNA. Can dissociate the MCM complex without addition of ATP; probably acts by destabilizing interactions of each individual subunits of the MCM complex. Required for sister chromatid cohesion. The chain is Mini-chromosome maintenance complex-binding protein (MCMBP) from Gallus gallus (Chicken).